Reading from the N-terminus, the 3036-residue chain is DmX-like protein 2 (3036 aa).

3 WD repeats span residues 108–145 (FLSS…ILEE), 167–207 (KTSV…KSSI), and 230–278 (AHPR…EDCL). A Phosphoserine modification is found at serine 326. The segment at 417–480 (KQVDHENDDA…EGSPRTYSRL (64 aa)) is disordered. A compositionally biased stretch (acidic residues) spans 422-434 (ENDDADREDEEHS). A compositionally biased stretch (basic and acidic residues) spans 435-473 (QEDRERGLHMKLDHDLSLDRESEAGTGSSEHEDGEREGS). Residue serine 473 is modified to Phosphoserine. The stretch at 492–532 (DRKIETLLTEWNKNPDMLFTIHPVDGTFLVWHVKYLDEYNP) is one WD 4 repeat. Serine 588 is subject to Phosphoserine. WD repeat units lie at residues 595–634 (HSRS…KSAF), 751–803 (LHTS…RKLL), and 878–920 (QPSQ…VQAC). The disordered stretch occupies residues 932–959 (SLLSVPGQKNVDSSPETSPSVSPMPHSS). Phosphoserine occurs at positions 944 and 945. Over residues 949–959 (SPSVSPMPHSS) the composition is skewed to low complexity. The WD 8 repeat unit spans residues 1000–1037 (LSSSSIYPVCLAPYLVVTTCSDNKVRFWKCCMEANPEC). Phosphoserine occurs at positions 1140, 1143, and 1151. 2 WD repeats span residues 1163–1204 (PNIK…VTEQ) and 1244–1281 (GTPS…VKFG). Phosphoserine occurs at positions 1287 and 1400. The residue at position 1417 (threonine 1417) is a Phosphothreonine. Serine 1857 carries the phosphoserine modification. The span at 1927-1936 (ISHRMDDVPS) shows a compositional bias: basic and acidic residues. The tract at residues 1927–1952 (ISHRMDDVPSHSKALSDGNGSSGIEW) is disordered. At serine 1984 the chain carries Phosphoserine. The tract at residues 1999 to 2033 (KSTDAREKDKQSDQKASDPNMLLTPQEEDDPEGDT) is disordered. Residues 2001–2014 (TDAREKDKQSDQKA) show a composition bias toward basic and acidic residues. Threonine 2022 is modified (phosphothreonine). Over residues 2024 to 2033 (QEEDDPEGDT) the composition is skewed to acidic residues. Residues 2122-2153 (GSYERHQIERRRLQAKREHAERRKSWLQKNQD) are a coiled coil. Residues serine 2399 and serine 2640 each carry the phosphoserine modification. 6 WD repeats span residues 2761–2800 (RNLH…QLVC), 2804–2843 (AGNA…SNPK), 2850–2892 (CHSK…GNSL), 2898–2937 (CHDH…LIHT), 2940–2979 (AHDS…LIHS), and 2992–3030 (NIGA…NIPN).

In terms of assembly, interacts with MADD and RAB3GAP.

It is found in the cytoplasmic vesicle. It localises to the secretory vesicle. The protein resides in the synaptic vesicle membrane. The protein localises to the neuronal dense core vesicle. Its function is as follows. May serve as a scaffold protein for MADD and RAB3GA on synaptic vesicles. Plays a role in the brain as a key controller of neuronal and endocrine homeostatic processes. This chain is DmX-like protein 2 (DMXL2), found in Homo sapiens (Human).